A 447-amino-acid polypeptide reads, in one-letter code: 23S rRNA (uracil(1939)-C(5))-methyltransferase RlmD (447 aa).

The TRAM domain maps to 7–66 (RKPLSQEPQKASIEALTHEGRGIAHVAGKTVFIDGALPGETVWFHYLRRRGKFDEGRVLE). The [4Fe-4S] cluster site is built by Cys-79, Cys-85, Cys-88, and Cys-168. Gln-275, Phe-304, Asn-309, Glu-325, Asp-352, and Asp-374 together coordinate S-adenosyl-L-methionine. The Nucleophile role is filled by Cys-400.

Belongs to the class I-like SAM-binding methyltransferase superfamily. RNA M5U methyltransferase family. RlmD subfamily.

It catalyses the reaction uridine(1939) in 23S rRNA + S-adenosyl-L-methionine = 5-methyluridine(1939) in 23S rRNA + S-adenosyl-L-homocysteine + H(+). Catalyzes the formation of 5-methyl-uridine at position 1939 (m5U1939) in 23S rRNA. In Nitrosococcus oceani (strain ATCC 19707 / BCRC 17464 / JCM 30415 / NCIMB 11848 / C-107), this protein is 23S rRNA (uracil(1939)-C(5))-methyltransferase RlmD.